A 920-amino-acid polypeptide reads, in one-letter code: Protein translocase subunit SecA 2 (920 aa).

ATP is bound by residues Gln91, 109 to 113 (GEGKT), and Asp527. The segment covering 859–870 (GEGSALDRRPTD) has biased composition (basic and acidic residues). A disordered region spans residues 859–920 (GEGSALDRRP…KSRNRRRRKR (62 aa)). Over residues 906–920 (PHRPGKSRNRRRRKR) the composition is skewed to basic residues.

The protein belongs to the SecA family. In terms of assembly, monomer and homodimer. Part of the essential Sec protein translocation apparatus which comprises SecA, SecYEG and auxiliary proteins SecDF. Other proteins may also be involved.

The protein resides in the cell membrane. The protein localises to the cytoplasm. The catalysed reaction is ATP + H2O + cellular proteinSide 1 = ADP + phosphate + cellular proteinSide 2.. Its function is as follows. Part of the Sec protein translocase complex. Interacts with the SecYEG preprotein conducting channel. Has a central role in coupling the hydrolysis of ATP to the transfer of proteins into and across the cell membrane, serving as an ATP-driven molecular motor driving the stepwise translocation of polypeptide chains across the membrane. The polypeptide is Protein translocase subunit SecA 2 (Streptomyces avermitilis (strain ATCC 31267 / DSM 46492 / JCM 5070 / NBRC 14893 / NCIMB 12804 / NRRL 8165 / MA-4680)).